We begin with the raw amino-acid sequence, 243 residues long: Interleukin-27 subunit alpha (243 aa).

The N-terminal stretch at 1–28 (MGQTAGDLGWRLSLLLLPLLLVQAGVWG) is a signal peptide.

It belongs to the IL-6 superfamily. In terms of assembly, heterodimer with EBI3; not disulfide-linked. This heterodimer is known as interleukin IL-27. Post-translationally, O-glycosylated. As to expression, expressed in monocytes and in placenta.

It is found in the secreted. Functionally, associates with EBI3 to form the IL-27 interleukin, a heterodimeric cytokine which functions in innate immunity. IL-27 has pro- and anti-inflammatory properties, that can regulate T-helper cell development, suppress T-cell proliferation, stimulate cytotoxic T-cell activity, induce isotype switching in B-cells, and that has diverse effects on innate immune cells. Among its target cells are CD4 T-helper cells which can differentiate in type 1 effector cells (TH1), type 2 effector cells (TH2) and IL17 producing helper T-cells (TH17). It drives rapid clonal expansion of naive but not memory CD4 T-cells. It also strongly synergizes with IL-12 to trigger interferon-gamma/IFN-gamma production of naive CD4 T-cells, binds to the cytokine receptor WSX-1/TCCR which appears to be required but not sufficient for IL-27-mediated signal transduction. IL-27 potentiate the early phase of TH1 response and suppress TH2 and TH17 differentiation. It induces the differentiation of TH1 cells via two distinct pathways, p38 MAPK/TBX21- and ICAM1/ITGAL/ERK-dependent pathways. It also induces STAT1, STAT3, STAT4 and STAT5 phosphorylation and activates TBX21/T-Bet via STAT1 with resulting IL12RB2 up-regulation, an event crucial to TH1 cell commitment. It suppresses the expression of GATA3, the inhibitor TH1 cells development. In CD8 T-cells, it activates STATs as well as GZMB. IL-27 reveals to be a potent inhibitor of TH17 cell development and of IL-17 production. Indeed IL27 alone is also able to inhibit the production of IL17 by CD4 and CD8 T-cells. While IL-27 suppressed the development of pro-inflammatory Th17 cells via STAT1, it inhibits the development of anti-inflammatory inducible regulatory T-cells, iTreg, independently of STAT1. IL-27 also has an effect on cytokine production, it suppresses pro-inflammatory cytokine production such as IL2, IL4, IL5 and IL6 and activates suppressors of cytokine signaling such as SOCS1 and SOCS3. Apart from suppression of cytokine production, IL-27 also antagonizes the effects of some cytokines such as IL6 through direct effects on T-cells. Another important role of IL-27 is its antitumor activity as well as its antiangiogenic activity with activation of production of antiangiogenic chemokines such as IP-10/CXCL10 and MIG/CXCL9. In vein endothelial cells, it induces IRF1/interferon regulatory factor 1 and increase the expression of MHC class II transactivator/CIITA with resulting up-regulation of major histocompatibility complex class II. IL-27 also demonstrates antiviral activity with inhibitory properties on HIV-1 replication. The chain is Interleukin-27 subunit alpha (IL27) from Homo sapiens (Human).